Reading from the N-terminus, the 189-residue chain is Phosphoheptose isomerase (189 aa).

The region spanning 34 to 189 is the SIS domain; sequence LADSLAGGRK…CDLVEKRLFP (156 aa). 49-51 contributes to the substrate binding site; it reads NGG. Zn(2+) is bound by residues His-58 and Glu-62. Substrate is bound by residues Glu-62, 91 to 92, 117 to 119, Ser-122, and Gln-169; these read ND and STS. Residues Gln-169 and His-177 each coordinate Zn(2+).

The protein belongs to the SIS family. GmhA subfamily. Homotetramer. It depends on Zn(2+) as a cofactor.

It is found in the cytoplasm. It catalyses the reaction 2 D-sedoheptulose 7-phosphate = D-glycero-alpha-D-manno-heptose 7-phosphate + D-glycero-beta-D-manno-heptose 7-phosphate. It functions in the pathway carbohydrate biosynthesis; D-glycero-D-manno-heptose 7-phosphate biosynthesis; D-glycero-alpha-D-manno-heptose 7-phosphate and D-glycero-beta-D-manno-heptose 7-phosphate from sedoheptulose 7-phosphate: step 1/1. In terms of biological role, catalyzes the isomerization of sedoheptulose 7-phosphate in D-glycero-D-manno-heptose 7-phosphate. This Geobacter sulfurreducens (strain ATCC 51573 / DSM 12127 / PCA) protein is Phosphoheptose isomerase.